A 265-amino-acid chain; its full sequence is Gamma-secretase subunit APH-1A (265 aa).

Residues 1-2 lie on the Lumenal side of the membrane; sequence MG. A helical membrane pass occupies residues 3–23; it reads AAVFFGCTFVAFGPAFALFLI. Residues 24–31 lie on the Cytoplasmic side of the membrane; that stretch reads TVAGDPLR. The chain crosses the membrane as a helical span at residues 32–52; it reads VIILVAGAFFWLVSLLLASVV. Topologically, residues 53–68 are lumenal; the sequence is WFILVHVTDRSDARLQ. A helical transmembrane segment spans residues 69–89; sequence YGLLIFGAAVSVLLQEVFRFA. The Cytoplasmic segment spans residues 90–118; sequence YYKLLKKADEGLASLSEDGRSPISIRQMA. Residues 119-139 form a helical membrane-spanning segment; that stretch reads YVSGLSFGIISGVFSVINILA. At 140-158 the chain is on the lumenal side; that stretch reads DALGPGVVGIHGDSPYYFL. A helical transmembrane segment spans residues 159-179; that stretch reads TSAFLTAAIILLHTFWGVVFF. Residues 180 to 186 lie on the Cytoplasmic side of the membrane; sequence DACERRR. Residues 187–207 form a helical membrane-spanning segment; that stretch reads YWALGLVVGSHLLTSGLTFLN. Over 208 to 213 the chain is Lumenal; that stretch reads PWYEAS. A helical transmembrane segment spans residues 214-234; the sequence is LLPIYAVTVSMGLWAFITAGG. Residues 235-265 are Cytoplasmic-facing; that stretch reads SLRSIQRSLLCRRQEDSRVMVYSALRIPPED.

Belongs to the APH-1 family. As to quaternary structure, the functional gamma-secretase complex is composed of at least four polypeptides: a presenilin homodimer (PSEN1 or PSEN2), nicastrin (NCSTN), APH1 (APH1A or APH1B) and PSENEN/PEN2. In terms of tissue distribution, widely expressed. Expressed in leukocytes, lung, placenta, small intestine, liver, kidney, spleen thymus, skeletal muscle, heart and brain. Isoform 1 and isoform 2 are nearly expressed at the same level.

It localises to the endoplasmic reticulum membrane. The protein resides in the golgi apparatus. It is found in the golgi stack membrane. Functionally, non-catalytic subunit of the gamma-secretase complex, an endoprotease complex that catalyzes the intramembrane cleavage of integral membrane proteins such as Notch receptors and APP (amyloid-beta precursor protein). Required for normal gamma-secretase assembly. The gamma-secretase complex plays a role in Notch and Wnt signaling cascades and regulation of downstream processes via its role in processing key regulatory proteins, and by regulating cytosolic CTNNB1 levels. The protein is Gamma-secretase subunit APH-1A (APH1A) of Homo sapiens (Human).